The following is a 233-amino-acid chain: Protein Mis18-alpha (233 aa).

Ser-36, Ser-39, and Ser-40 each carry phosphoserine. Residues 80-178 (PLVFLCSGCR…SVEAIESYVL (99 aa)) enclose the Mis18 domain. Zn(2+) is bound by residues Cys-85, Cys-88, Cys-141, and Cys-144. Lys-162 is covalently cross-linked (Glycyl lysine isopeptide (Lys-Gly) (interchain with G-Cter in SUMO2)). Residue Ser-233 is modified to Phosphoserine.

Belongs to the mis18 family. As to quaternary structure, homodimer, and heterodimer with OIP5/MIS18B. Identified in a complex containing MIS18A, OIP5/MIS18B, MIS18BP1, RBBP7 and RBBP4. In terms of tissue distribution, detected in testis.

Its subcellular location is the nucleus. It localises to the chromosome. The protein resides in the centromere. Functionally, required for recruitment of CENPA to centromeres and normal chromosome segregation during mitosis. The polypeptide is Protein Mis18-alpha (MIS18A) (Homo sapiens (Human)).